The primary structure comprises 204 residues: Histone chaperone ASF1A (204 aa).

The interaction with histone H3, CHAF1B, and HIRA stretch occupies residues 1 to 156; it reads MAKVQVNNVV…TRFHINWEDN (156 aa). The Required for interaction with HIRA signature appears at 31-37; the sequence is IEDLSED. The segment at 155 to 204 is required for interaction with HIRA; sequence DNTEKLEDAESSNPNLQSLLSTDALPSASKGWSTSENSLNVMLESHMDCM. Ser192 carries the phosphoserine modification.

The protein belongs to the ASF1 family. As to quaternary structure, interacts with histone H3 (via C-terminus), including histone H3.1, H3.2 and H3.3, and histone H4; the interaction with H3 is direct. Probably interacts with the heterodimeric form of H3-H4 taking the place of the second dimer. Interacts with the CHAF1A, CHAF1B and RBBP4 subunits of the CAF-1 complex. Interacts with CABIN1, HAT1, HIRA, NASP, TAF1 and UBN1. Found in a soluble complex with NASP and histones H3 and H4; the interaction with NASP is probably indirect and mediated by H3-H4. Interacts with CDAN1. Found in a cytosolic complex with IPO4 and histones H3 and H4. Interacts with CREBBP. In terms of processing, phosphorylated by TLK1 and TLK2. Highly phosphorylated in S-phase and at lower levels in M-phase. TLK2-mediated phosphorylation at Ser-192 prevents proteasome-dependent degradation. Phosphorylation at Ser-192 by PRKDC in response to DNA damage promotes the histone chaperone activity and ability to replace histones at double-strand breaks (DSBs) at stalled or collapsed replication forks, leading to RAD51 recruitment.

The protein resides in the nucleus. The protein localises to the chromosome. Histone chaperone that facilitates histone deposition and histone exchange and removal during nucleosome assembly and disassembly. Cooperates with chromatin assembly factor 1 (CAF-1) to promote replication-dependent chromatin assembly and with HIRA to promote replication-independent chromatin assembly. Promotes homologous recombination-mediated repair of double-strand breaks (DSBs) at stalled or collapsed replication forks: acts by mediating histone replacement at DSBs, leading to recruitment of the MMS22L-TONSL complex and subsequent loading of RAD51. Also involved in the nuclear import of the histone H3-H4 dimer together with importin-4 (IPO4): specifically recognizes and binds newly synthesized histones with the monomethylation of H3 'Lys-9' and acetylation at 'Lys-14' (H3K9me1K14ac) marks, and diacetylation at 'Lys-5' and 'Lys-12' of H4 (H4K5K12ac) marks in the cytosol. Required for the formation of senescence-associated heterochromatin foci (SAHF) and efficient senescence-associated cell cycle exit. This Mus musculus (Mouse) protein is Histone chaperone ASF1A.